The chain runs to 59 residues: Ribosome biogenesis protein Nop10 (59 aa).

This sequence belongs to the NOP10 family.

In terms of biological role, involved in ribosome biogenesis; more specifically in 18S rRNA pseudouridylation and in cleavage of pre-rRNA. The protein is Ribosome biogenesis protein Nop10 of Thermococcus kodakarensis (strain ATCC BAA-918 / JCM 12380 / KOD1) (Pyrococcus kodakaraensis (strain KOD1)).